The sequence spans 272 residues: Transformer-2 sex-determining protein (272 aa).

Disordered regions lie at residues 21–102 (KHKC…DHPQ) and 182–272 (ITQR…QSRY). A compositionally biased stretch (low complexity) spans 26–41 (HSSATSSPSSAASSES). Residues 87-102 (TSRDRQRMRQARDHPQ) show a composition bias toward basic and acidic residues. The 79-residue stretch at 105–183 (RCIGVFGLNT…RRIRVDYSIT (79 aa)) folds into the RRM domain. The tract at residues 184-204 (QRAHTPTPGVYMGRPSRPLGR) is linker. Over residues 205–218 (RSRERDYSTRDTSR) the composition is skewed to basic and acidic residues. Residues 238-266 (RKYRSRHRYDRSRSRTRSYSRSRSPRKPV) are compositionally biased toward basic residues.

Belongs to the splicing factor SR family. Extensively phosphorylated on serine residues in the RS domain.

Its function is as follows. Required for female sex determination in somatic cells and for spermatogenesis in male germ cells. Positive regulator of female-specific splicing and/or polyadenylation of doublesex (dsx) pre-mRNA. Splicing requires an enhancer complex, dsxRE (dsx repeat element: which contains six copies of a 13-nucleotide repeat and a purine-rich enhancer (PRE)). DsxRE is formed through cooperative interactions between tra, tra2 and the sr proteins, and these interactions require both the repeat sequences and PRE. PRE is required for specific binding of tra2 to the dsxRE. Protein-RNA and protein-protein interactions are involved in tra-2 dependent activation and repression of alternative splicing. The chain is Transformer-2 sex-determining protein (tra2) from Drosophila virilis (Fruit fly).